The chain runs to 286 residues: Cytosolic 5'-nucleotidase 3 (286 aa).

Asp-38 serves as the catalytic Nucleophile. Residues Asp-38 and Asp-40 each coordinate Mg(2+). Catalysis depends on Asp-40, which acts as the Proton donor. Substrate-binding positions include Glu-85, Ser-106, 153–154 (SA), and Lys-202. Asp-227 contacts Mg(2+).

Belongs to the pyrimidine 5'-nucleotidase family.

The protein resides in the cytoplasm. The catalysed reaction is a ribonucleoside 5'-phosphate + H2O = a ribonucleoside + phosphate. Its function is as follows. Can act both as nucleotidase and as phosphotransferase. In Danio rerio (Zebrafish), this protein is Cytosolic 5'-nucleotidase 3 (nt5c3).